Here is a 610-residue protein sequence, read N- to C-terminus: Solute carrier family 23 member 3 (610 aa).

Residues 1 to 16 (MSRSPLNPSQLRSVGS) are compositionally biased toward polar residues. A disordered region spans residues 1-32 (MSRSPLNPSQLRSVGSQDALAPLPPPAPQNPS). The Cytoplasmic portion of the chain corresponds to 1-49 (MSRSPLNPSQLRSVGSQDALAPLPPPAPQNPSTHSWDPLCGSLPWGLSC). The chain crosses the membrane as a helical span at residues 50–70 (LLALQHVLVMASLLCVSHLLL). Over 71–85 (LCSLSPGGLSYSPSQ) the chain is Extracellular. The chain crosses the membrane as a helical span at residues 86–106 (LLASSFFSCGMSTILQTWMGS). At 107–164 (RLPLVQAPSLEFLIPALVLTSQKLPRAIQTPGNSSLMLHLCRGPSCHGLGHWNTSLQE) the chain is on the cytoplasmic side. The helical transmembrane segment at 165-185 (VSGAVVVSGLLQGMMGLLGSP) threads the bilayer. Residues 186–187 (GH) lie on the Extracellular side of the membrane. The chain crosses the membrane as a helical span at residues 188–208 (VFPHCGPLVLAPSLVVAGLSA). Residues 209-211 (HRE) lie on the Cytoplasmic side of the membrane. A helical membrane pass occupies residues 212-232 (VAQFCFTHWGLALLVILLMVV). The Extracellular segment spans residues 233–266 (CSQHLGSCQFHVCPWRRASTSSTHTPLPVFRLLS). Residues 267–287 (VLIPVACVWIVSAFVGFSVIP) form a helical membrane-spanning segment. Residues 288 to 316 (QELSAPTKAPWIWLPHPGEWNWPLLTPRA) are Cytoplasmic-facing. A helical membrane pass occupies residues 317–337 (LAAGISMALAASTSSLGCYAL). The Extracellular portion of the chain corresponds to 338–355 (CGRLLHLPPPPPHACSRG). Residues 356–376 (LSLEGLGSVLAGLLGSPMGTA) form a helical membrane-spanning segment. The Cytoplasmic segment spans residues 377–394 (SSFPNVGKVGLIQAGSQQ). Residues 395–414 (VAHLVGLLCVGLGLSPRLAQ) form a helical membrane-spanning segment. The Extracellular segment spans residues 415–423 (LLTTIPLPV). The chain crosses the membrane as a helical span at residues 424 to 446 (VGGVLGVTQAVVLSAGFSSFYLA). Over 447–452 (DIDSGR) the chain is Cytoplasmic. The chain crosses the membrane as a helical span at residues 453–472 (NIFIVGFSIFMALLLPRWFR). Residues 473–486 (EAPVLFSTGWSPLD) are Extracellular-facing. A helical membrane pass occupies residues 487–507 (VLLHSLLTQPIFLAGLSGFLL). Topologically, residues 508 to 610 (ENTIPGTQLE…SSREGFRSQK (103 aa)) are cytoplasmic. Residues 571 to 610 (PEDPGDEEGGSSEPEEMADLLPGSGEPCPESSREGFRSQK) are disordered. The segment covering 573 to 588 (DPGDEEGGSSEPEEMA) has biased composition (acidic residues). Residues 601 to 610 (SSREGFRSQK) are compositionally biased toward basic and acidic residues.

This sequence belongs to the nucleobase:cation symporter-2 (NCS2) (TC 2.A.40) family.

The protein localises to the membrane. It catalyses the reaction hypoxanthine(out) + Na(+)(out) = hypoxanthine(in) + Na(+)(in). In terms of biological role, acts as a sodium-dependent hypoxanthine transporter. May show xanthine-hypoxanthine exchange activity. This Homo sapiens (Human) protein is Solute carrier family 23 member 3 (SLC23A3).